We begin with the raw amino-acid sequence, 420 residues long: Hemocyanin 2-c chain (420 aa).

Positions 1–12 are enriched in basic residues; sequence DFGHSKKIRKNV. The segment at 1–20 is disordered; the sequence is DFGHSKKIRKNVHSLTAEEQ. His46 is a Cu cation binding site. A disulfide bond links Cys52 and Cys63. Cu cation-binding residues include His66, His73, His185, His189, and His216. 2 disulfides stabilise this stretch: Cys175–Cys242 and Cys335–Cys342.

Post-translationally, O-glycosylated. Hemolymph.

The protein localises to the secreted. It is found in the extracellular space. Functionally, hemocyanins are copper-containing oxygen carriers occurring freely dissolved in the hemolymph of many mollusks and arthropods. This chain is Hemocyanin 2-c chain, found in Megathura crenulata (Giant keyhole limpet).